Consider the following 392-residue polypeptide: Large ribosomal subunit protein uL3 (392 aa).

It belongs to the universal ribosomal protein uL3 family.

It localises to the cytoplasm. Functionally, the L3 protein is a component of the large subunit of cytoplasmic ribosomes. This is Large ribosomal subunit protein uL3 (rpl3) from Aspergillus fumigatus (strain ATCC MYA-4609 / CBS 101355 / FGSC A1100 / Af293) (Neosartorya fumigata).